The chain runs to 101 residues: Gamma-secretase subunit PEN-2 (101 aa).

Topologically, residues methionine 1–arginine 17 are cytoplasmic. The helical intramembrane region spans tyrosine 18–tryptophan 36. At phenylalanine 37–valine 57 the chain is on the cytoplasmic side. A helical transmembrane segment spans residues lysine 58 to phenylalanine 78. Over glutamine 79 to alanine 101 the chain is Lumenal.

The protein belongs to the PEN-2 family. In terms of assembly, the functional gamma-secretase complex is composed of at least four polypeptides: a presenilin homodimer (psen1 or psen2), nicastrin (ncstn), aph1 (aph1a or aph1b) and psenen.

It localises to the endoplasmic reticulum membrane. It is found in the golgi apparatus. Its subcellular location is the golgi stack membrane. The protein resides in the cell membrane. The protein localises to the membrane. Functionally, essential subunit of the gamma-secretase complex, an endoprotease complex that catalyzes the intramembrane cleavage of integral membrane proteins such as Notch receptors and APP (amyloid-beta precursor protein). The gamma-secretase complex plays a role in Notch and Wnt signaling cascades and regulation of downstream processes via its role in processing key regulatory proteins. The chain is Gamma-secretase subunit PEN-2 (psenen) from Danio rerio (Zebrafish).